The primary structure comprises 82 residues: UPF0248 protein Mevan_1298 (82 aa).

It belongs to the UPF0248 family.

The polypeptide is UPF0248 protein Mevan_1298 (Methanococcus vannielii (strain ATCC 35089 / DSM 1224 / JCM 13029 / OCM 148 / SB)).